A 265-amino-acid polypeptide reads, in one-letter code: Apolipoprotein A-I (265 aa).

A signal peptide spans 1-18 (MKAVVLAVAALFLAGGEA). 2 tandem repeats follow at residues 68–89 (LKLTENLDTLSSTFSKLREQLG) and 90–111 (PVTQEFWQNLEKDTEWLRQEMN). Positions 68–265 (LKLTENLDTL…EEASKKLSSQ (198 aa)) are 10 X approximate tandem repeats. Methionine sulfoxide is present on methionine 110. The 3; half-length repeat unit spans residues 112-122 (KDLADMKQKVQ). 3 repeat units span residues 123 to 144 (PYMEQFQKTWQEEVERYRQKVE), 145 to 166 (PLSTELREGARQKLQELQEKLA), and 167 to 188 (PLGADLRDSARVHVDALRTQLA). A 7; truncated repeat occupies 189 to 208 (PYSEQMRERLAERLAALRDS). Position 194 is a methionine sulfoxide (methionine 194). Repeat 8 spans residues 209 to 230 (PSLAEYQAKAHEHLKTLHEKAQ). The stretch at 231 to 241 (PALSDLGQGVL) is one 9; half-length repeat. Repeat unit 10 spans residues 242–265 (PVLESLKATLVGAIEEASKKLSSQ).

This sequence belongs to the apolipoprotein A1/A4/E family. Homodimer. Interacts with APOA1BP and CLU. Component of a sperm activating protein complex (SPAP), consisting of APOA1, an immunoglobulin heavy chain, an immunoglobulin light chain and albumin. Interacts with NDRG1. Interacts with SCGB3A2. Interacts with NAXE and YJEFN3. In terms of processing, glycosylated. Post-translationally, palmitoylated. Phosphorylation sites are present in the extracellular medium.

Its subcellular location is the secreted. Its function is as follows. Participates in the reverse transport of cholesterol from tissues to the liver for excretion by promoting cholesterol efflux from tissues and by acting as a cofactor for the lecithin cholesterol acyltransferase (LCAT). As part of the SPAP complex, activates spermatozoa motility. In Dipodomys ordii (Ord's kangaroo rat), this protein is Apolipoprotein A-I (Apoa1).